Reading from the N-terminus, the 475-residue chain is Putative aldehyde dehydrogenase (475 aa).

Residues 146–147 (WN) and 223–224 (GS) each bind NAD(+). The active-site Proton acceptor is the glutamate 245. NAD(+) is bound at residue leucine 246. The active-site Nucleophile is the cysteine 279. Glutamate 379 provides a ligand contact to NAD(+).

Belongs to the aldehyde dehydrogenase family.

The catalysed reaction is an aldehyde + NAD(+) + H2O = a carboxylate + NADH + 2 H(+). The polypeptide is Putative aldehyde dehydrogenase (Staphylococcus aureus (strain MSSA476)).